The sequence spans 156 residues: MPRRREVPKREILPDPKFGSVDLSKFMNVIMESGKKAVAERIIYGALEQVEKKAGKDPMEIFLTALNNVKPMVEVKSRRVGGANYQVPVEVRPIRRMALAMRWLKESARKRSEKSMAQRLANELMEACEGRGGAMKKRDEVHRMAEANKAFSHFRF.

Belongs to the universal ribosomal protein uS7 family. In terms of assembly, part of the 30S ribosomal subunit. Contacts proteins S9 and S11.

One of the primary rRNA binding proteins, it binds directly to 16S rRNA where it nucleates assembly of the head domain of the 30S subunit. Is located at the subunit interface close to the decoding center, probably blocks exit of the E-site tRNA. The sequence is that of Small ribosomal subunit protein uS7 from Leptothrix cholodnii (strain ATCC 51168 / LMG 8142 / SP-6) (Leptothrix discophora (strain SP-6)).